A 244-amino-acid polypeptide reads, in one-letter code: Uridylate kinase (244 aa).

16-19 (KLSG) lines the ATP pocket. Gly-58 is a UMP binding site. Gly-59 and Arg-63 together coordinate ATP. Residues Asp-78 and 139-146 (VGAPYFTT) contribute to the UMP site. ATP contacts are provided by Thr-166, Tyr-172, and Asp-175.

The protein belongs to the UMP kinase family. Homohexamer.

The protein localises to the cytoplasm. It catalyses the reaction UMP + ATP = UDP + ADP. Its pathway is pyrimidine metabolism; CTP biosynthesis via de novo pathway; UDP from UMP (UMPK route): step 1/1. Its activity is regulated as follows. Inhibited by UTP. Catalyzes the reversible phosphorylation of UMP to UDP. This chain is Uridylate kinase, found in Novosphingobium aromaticivorans (strain ATCC 700278 / DSM 12444 / CCUG 56034 / CIP 105152 / NBRC 16084 / F199).